The primary structure comprises 642 residues: Chaperone protein DnaK (642 aa).

Thr196 bears the Phosphothreonine; by autocatalysis mark. A compositionally biased stretch (polar residues) spans 593-603 (STMYQTPSGDT). The disordered stretch occupies residues 593 to 642 (STMYQTPSGDTPPSEPETGASEESKGGDKTQGDGEVDAEYEVIDGNDKDK). Positions 614–624 (EESKGGDKTQG) are enriched in basic and acidic residues. The span at 626 to 636 (GEVDAEYEVID) shows a compositional bias: acidic residues.

It belongs to the heat shock protein 70 family.

In terms of biological role, acts as a chaperone. In Chlorobium phaeobacteroides (strain BS1), this protein is Chaperone protein DnaK.